The primary structure comprises 229 residues: Cytidylate kinase (229 aa).

ATP is bound at residue 12–20 (GPSGSGKGT).

It belongs to the cytidylate kinase family. Type 1 subfamily.

The protein localises to the cytoplasm. It carries out the reaction CMP + ATP = CDP + ADP. The catalysed reaction is dCMP + ATP = dCDP + ADP. This chain is Cytidylate kinase, found in Stutzerimonas stutzeri (strain A1501) (Pseudomonas stutzeri).